Consider the following 155-residue polypeptide: Aspartate carbamoyltransferase regulatory chain (155 aa).

Zn(2+)-binding residues include cysteine 109, cysteine 114, cysteine 138, and cysteine 141.

Belongs to the PyrI family. As to quaternary structure, contains catalytic and regulatory chains. The cofactor is Zn(2+).

Functionally, involved in allosteric regulation of aspartate carbamoyltransferase. In Vibrio cholerae serotype O1 (strain ATCC 39315 / El Tor Inaba N16961), this protein is Aspartate carbamoyltransferase regulatory chain.